The chain runs to 277 residues: Shikimate dehydrogenase (NADP(+)) (277 aa).

Shikimate contacts are provided by residues 15 to 17 and Thr-62; that span reads SLS. Residue Lys-66 is the Proton acceptor of the active site. Shikimate is bound by residues Asn-87 and Asp-102. NADP(+) is bound by residues 127-131 and Ile-219; that span reads GAGGA. Position 221 (Tyr-221) interacts with shikimate. Gly-242 lines the NADP(+) pocket.

The protein belongs to the shikimate dehydrogenase family. In terms of assembly, homodimer.

The enzyme catalyses shikimate + NADP(+) = 3-dehydroshikimate + NADPH + H(+). The protein operates within metabolic intermediate biosynthesis; chorismate biosynthesis; chorismate from D-erythrose 4-phosphate and phosphoenolpyruvate: step 4/7. Its function is as follows. Involved in the biosynthesis of the chorismate, which leads to the biosynthesis of aromatic amino acids. Catalyzes the reversible NADPH linked reduction of 3-dehydroshikimate (DHSA) to yield shikimate (SA). The protein is Shikimate dehydrogenase (NADP(+)) of Bacillus cytotoxicus (strain DSM 22905 / CIP 110041 / 391-98 / NVH 391-98).